The sequence spans 37 residues: Chorion class CB protein PCH12 (37 aa).

The central domain stretch occupies residues 1–26; it reads DGIFPTVGAGDVWYGCGDGAVGIVAE. Residues 27–37 are right arm; that stretch reads TPFASTTTNPA.

The protein belongs to the chorion protein family.

This protein is one of many from the eggshell of the silk moth. The chain is Chorion class CB protein PCH12 from Antheraea polyphemus (Polyphemus moth).